Reading from the N-terminus, the 309-residue chain is Putative taste receptor type 2 member 36 (309 aa).

A topological domain (extracellular) is located at residue Met-1. A helical transmembrane segment spans residues 2–22 (ICFLLIILSILVVFAFVLGNF). At 23 to 46 (SNGFIALVNVIDWVKRQKISSADQ) the chain is on the cytoplasmic side. The helical transmembrane segment at 47–67 (ILTALVVSRVGLLWVILLHWY) threads the bilayer. At 68–79 (SNVLNSALYSSE) the chain is on the extracellular side. The helical transmembrane segment at 80–100 (VIIFISNAWAIINHFSIWLAT) threads the bilayer. Residues 101 to 126 (SLSIFYLLKIVNFSRLIFHHLKRKAK) lie on the Cytoplasmic side of the membrane. A helical membrane pass occupies residues 127–147 (SVVLVIVLGPLVFLVCHLVMK). At 148-181 (HTYINVWTKEYEGNVTWKIKLRNAIHLSNLTVST) the chain is on the extracellular side. N-linked (GlcNAc...) asparagine glycosylation is found at Asn-161 and Asn-176. A helical membrane pass occupies residues 182-202 (LANLIPFTLTLISFLLLIYSL). Topologically, residues 203 to 229 (CKHLKKMQLHGKGSQDPSTKVHIKALQ) are cytoplasmic. Residues 230–250 (TVTSFLLLCAIYFLSMIISVC) traverse the membrane as a helical segment. The Extracellular segment spans residues 251–259 (NFGRLEKQP). A helical transmembrane segment spans residues 260-280 (VFMFCQAIIFSYPSTHPFILI). Residues 281–309 (LGNKKLKQIFLSVFWQMRYWVKGEKPSSP) are Cytoplasmic-facing.

It belongs to the G-protein coupled receptor T2R family.

It localises to the membrane. Putative taste receptor which may play a role in the perception of bitterness. This is Putative taste receptor type 2 member 36 from Homo sapiens (Human).